A 273-amino-acid polypeptide reads, in one-letter code: Large ribosomal subunit protein uL2 (273 aa).

The interval 221–263 (RGTAMNPVDHPHGGGEGRNFGKHPVSPWGLKTKGKKTRRNKRT) is disordered. Residues 252-263 (TKGKKTRRNKRT) are compositionally biased toward basic residues.

It belongs to the universal ribosomal protein uL2 family. As to quaternary structure, part of the 50S ribosomal subunit. Forms a bridge to the 30S subunit in the 70S ribosome.

In terms of biological role, one of the primary rRNA binding proteins. Required for association of the 30S and 50S subunits to form the 70S ribosome, for tRNA binding and peptide bond formation. It has been suggested to have peptidyltransferase activity; this is somewhat controversial. Makes several contacts with the 16S rRNA in the 70S ribosome. The polypeptide is Large ribosomal subunit protein uL2 (Buchnera aphidicola subsp. Cinara cedri (strain Cc)).